We begin with the raw amino-acid sequence, 575 residues long: Reverse gyrse subunit B (575 aa).

The RG N-terminal-type; degenerate zinc finger occupies 1-39; that stretch reads MKIYYNNVCPNCSGRISNERLIKGLPCENDYPYEEGTIE. Residues Gln83 and 100–107 contribute to the ATP site; that span reads APTGMGKT. The Helicase ATP-binding domain occupies 87-247; sequence FIRAYKGYSF…KLKISGKDLE (161 aa). Positions 204–207 match the DEAD box motif; the sequence is DDVD. In terms of domain architecture, Helicase C-terminal spans 316 to 465; that stretch reads QTLELIKKLG…ALKMVEEAIE (150 aa).

The protein belongs to the DEAD box helicase family. DDVD subfamily. In terms of assembly, heterodimer of an RgyA and RgyB subunit.

The protein resides in the cytoplasm. It carries out the reaction ATP + H2O = ADP + phosphate + H(+). In terms of biological role, modifies the topological state of DNA by introducing positive supercoils in an ATP-dependent process. Binds to single-stranded DNA, transiently cleaves and then rejoins the end, introducing a positive supercoil in the process. The scissile phosphodiester is attacked by the catalytic tyrosine of the enzyme, resulting in the formation of a DNA-(5'-phosphotyrosyl)-enzyme intermediate. Probably involved in rewinding DNA strands in regions of the chromosome that have opened up to allow replication, transcription, DNA repair or for DNA protection. Reconstituted holoenzyme binds dsDNA a bit better than ssDNA, this subunit preferentially binds dsDNA. In isolation this subunit has DNA-stimulated ATPase activity that is stimulated by topoisomerase-domain containing RgyA. This subunit inhibits the relaxation activity of the topoisomerase subunit while promoting positive supercoiling. The sequence is that of Reverse gyrse subunit B from Nanoarchaeum equitans (strain Kin4-M).